The primary structure comprises 312 residues: Peroxidase (312 aa).

The N-terminal stretch at 1–23 is a signal peptide; it reads MAMGSASCISLVVLVALATAASG. Gln-24 bears the Pyrrolidone carboxylic acid mark. 4 disulfides stabilise this stretch: Cys-34–Cys-107, Cys-67–Cys-70, Cys-113–Cys-307, and Cys-192–Cys-218. His-65 (proton acceptor) is an active-site residue. Ca(2+) is bound by residues Asp-66, Gly-69, Asp-71, and Ser-73. Pro-155 contacts substrate. A heme b-binding site is contributed by His-185. Thr-186 serves as a coordination point for Ca(2+). 3 residues coordinate Ca(2+): Asp-231, Thr-234, and Asp-239. Asn-262 is a glycosylation site (N-linked (GlcNAc...) asparagine).

It belongs to the peroxidase family. Classical plant (class III) peroxidase subfamily. Ca(2+) is required as a cofactor. Heme b serves as cofactor. Root.

The protein resides in the secreted. The enzyme catalyses 2 a phenolic donor + H2O2 = 2 a phenolic radical donor + 2 H2O. In terms of biological role, removal of H(2)O(2), oxidation of toxic reductants, biosynthesis and degradation of lignin, suberization, auxin catabolism, response to environmental stresses such as wounding, pathogen attack and oxidative stress. These functions might be dependent on each isozyme/isoform in each plant tissue. Involved in defense response to powdery meldew fungus. This chain is Peroxidase, found in Triticum aestivum (Wheat).